Consider the following 364-residue polypeptide: Histidinol-phosphate aminotransferase (364 aa).

Position 226 is an N6-(pyridoxal phosphate)lysine (lysine 226).

This sequence belongs to the class-II pyridoxal-phosphate-dependent aminotransferase family. Histidinol-phosphate aminotransferase subfamily. Homodimer. Pyridoxal 5'-phosphate is required as a cofactor.

The enzyme catalyses L-histidinol phosphate + 2-oxoglutarate = 3-(imidazol-4-yl)-2-oxopropyl phosphate + L-glutamate. It participates in amino-acid biosynthesis; L-histidine biosynthesis; L-histidine from 5-phospho-alpha-D-ribose 1-diphosphate: step 7/9. The sequence is that of Histidinol-phosphate aminotransferase from Sulfurimonas denitrificans (strain ATCC 33889 / DSM 1251) (Thiomicrospira denitrificans (strain ATCC 33889 / DSM 1251)).